The following is a 90-amino-acid chain: DNA-directed RNA polymerase subunit Rpo11 (90 aa).

The protein belongs to the archaeal Rpo11/eukaryotic RPB11/RPC19 RNA polymerase subunit family. Part of the RNA polymerase complex.

The protein resides in the cytoplasm. The catalysed reaction is RNA(n) + a ribonucleoside 5'-triphosphate = RNA(n+1) + diphosphate. In terms of biological role, DNA-dependent RNA polymerase (RNAP) catalyzes the transcription of DNA into RNA using the four ribonucleoside triphosphates as substrates. The polypeptide is DNA-directed RNA polymerase subunit Rpo11 (Metallosphaera sedula (strain ATCC 51363 / DSM 5348 / JCM 9185 / NBRC 15509 / TH2)).